A 267-amino-acid chain; its full sequence is Phosphatidylglycerol--prolipoprotein diacylglyceryl transferase (267 aa).

Transmembrane regions (helical) follow at residues 20–40 (LEIR…VYLA), 57–77 (FILI…VAFS), 88–108 (IFAI…GAIV), and 117–137 (FINT…AQAI). Position 139 (arginine 139) interacts with a 1,2-diacyl-sn-glycero-3-phospho-(1'-sn-glycerol). 3 consecutive transmembrane segments (helical) span residues 175 to 195 (QPTF…VCVL), 205 to 225 (GEIT…IEGL), and 235 to 255 (IRVS…MVVL).

This sequence belongs to the Lgt family.

The protein resides in the cell membrane. The enzyme catalyses L-cysteinyl-[prolipoprotein] + a 1,2-diacyl-sn-glycero-3-phospho-(1'-sn-glycerol) = an S-1,2-diacyl-sn-glyceryl-L-cysteinyl-[prolipoprotein] + sn-glycerol 1-phosphate + H(+). It functions in the pathway protein modification; lipoprotein biosynthesis (diacylglyceryl transfer). In terms of biological role, catalyzes the transfer of the diacylglyceryl group from phosphatidylglycerol to the sulfhydryl group of the N-terminal cysteine of a prolipoprotein, the first step in the formation of mature lipoproteins. The chain is Phosphatidylglycerol--prolipoprotein diacylglyceryl transferase from Streptococcus suis (strain 98HAH33).